Reading from the N-terminus, the 670-residue chain is Methionine--tRNA ligase (670 aa).

The short motif at 14–24 is the 'HIGH' region element; the sequence is PYANGHLHLGH. Positions 145, 148, 158, and 161 each coordinate Zn(2+). Positions 330–334 match the 'KMSKS' region motif; it reads KMSKS. Lys-333 lines the ATP pocket. The region spanning 570–670 is the tRNA-binding domain; sequence DFAKVDLRIA…AGALPGMKVK (101 aa).

It belongs to the class-I aminoacyl-tRNA synthetase family. MetG type 1 subfamily. As to quaternary structure, homodimer. It depends on Zn(2+) as a cofactor.

It localises to the cytoplasm. It carries out the reaction tRNA(Met) + L-methionine + ATP = L-methionyl-tRNA(Met) + AMP + diphosphate. Functionally, is required not only for elongation of protein synthesis but also for the initiation of all mRNA translation through initiator tRNA(fMet) aminoacylation. The polypeptide is Methionine--tRNA ligase (Legionella pneumophila subsp. pneumophila (strain Philadelphia 1 / ATCC 33152 / DSM 7513)).